Reading from the N-terminus, the 137-residue chain is uncharacterized protein (137 aa).

The protein belongs to the ycf72 family.

Its subcellular location is the plastid. The protein resides in the chloroplast. This is an uncharacterized protein from Oryza nivara (Indian wild rice).